A 116-amino-acid chain; its full sequence is MLSCRLQCALAALSIVLALGGVTCAPSDPRLRQFLQKSLAAAAGKQELAKYFLAELLSEPNQTENDALEPEDLSQAAEQDEMRLELQRSANSNPAMAPRERKAGCKNFFWKTFTSC.

The signal sequence occupies residues 1 to 24; the sequence is MLSCRLQCALAALSIVLALGGVTC. Positions 25 to 88 are excised as a propeptide; that stretch reads APSDPRLRQF…QDEMRLELQR (64 aa). The residue at position 43 (A43) is an Alanine amide. The interval 62-99 is disordered; the sequence is QTENDALEPEDLSQAAEQDEMRLELQRSANSNPAMAPR. C105 and C116 are disulfide-bonded.

This sequence belongs to the somatostatin family. C-terminal amidation of the neuronostatin peptide is required for its biological activity, including for the regulation of mean arterial pressure.

It localises to the secreted. Functionally, inhibits the secretion of pituitary hormones, including that of growth hormone/somatotropin (GH1), PRL, ACTH, luteinizing hormone (LH) and TSH. Also impairs ghrelin- and GnRH-stimulated secretion of GH1 and LH; the inhibition of ghrelin-stimulated secretion of GH1 can be further increased by neuronostatin. Its function is as follows. May enhance low-glucose-induced glucagon release by pancreatic alpha cells. This effect may be mediated by binding to GPR107 and PKA activation. May regulate cardiac contractile function. May compromise cardiomyocyte viability. In the central nervous system, may impair memory retention and may affect hippocampal excitability. May also have anxiolytic and anorexigenic effects. May play a role in arterial pressure regulation. May inhibit basal, but not ghrelin- or GnRH-stimulated secretion of GH1 or LH, but does not affect the release of other pituitary hormones, including PRL, ACTH, FSH or TSH. Potentiates inhibitory action of somatostatin on ghrelin-stimulated secretion of GH1, but not that on GnRH-stimulated secretion of LH. The chain is Somatostatin (SST) from Canis lupus familiaris (Dog).